The primary structure comprises 78 residues: MSKNNLNETESKIEIEAKVVELLSNDKFKVELPNKKTIIAYVSGKIRINNIRILPGDKVRIELSPYDPTRARITYRFK.

One can recognise an S1-like domain in the interval 2–78 (SKNNLNETES…TRARITYRFK (77 aa)).

Belongs to the IF-1 family. Component of the 30S ribosomal translation pre-initiation complex which assembles on the 30S ribosome in the order IF-2 and IF-3, IF-1 and N-formylmethionyl-tRNA(fMet); mRNA recruitment can occur at any time during PIC assembly.

It localises to the cytoplasm. In terms of biological role, one of the essential components for the initiation of protein synthesis. Stabilizes the binding of IF-2 and IF-3 on the 30S subunit to which N-formylmethionyl-tRNA(fMet) subsequently binds. Helps modulate mRNA selection, yielding the 30S pre-initiation complex (PIC). Upon addition of the 50S ribosomal subunit IF-1, IF-2 and IF-3 are released leaving the mature 70S translation initiation complex. This is Translation initiation factor IF-1 from Onion yellows phytoplasma (strain OY-M).